Reading from the N-terminus, the 305-residue chain is Coenzyme PQQ synthesis protein B (305 aa).

The protein belongs to the PqqB family.

It functions in the pathway cofactor biosynthesis; pyrroloquinoline quinone biosynthesis. Functionally, may be involved in the transport of PQQ or its precursor to the periplasm. This chain is Coenzyme PQQ synthesis protein B, found in Cupriavidus taiwanensis (strain DSM 17343 / BCRC 17206 / CCUG 44338 / CIP 107171 / LMG 19424 / R1) (Ralstonia taiwanensis (strain LMG 19424)).